The sequence spans 68 residues: Large ribosomal subunit protein uL29 (68 aa).

This sequence belongs to the universal ribosomal protein uL29 family.

The protein is Large ribosomal subunit protein uL29 (rpl29) of Thermoplasma acidophilum (strain ATCC 25905 / DSM 1728 / JCM 9062 / NBRC 15155 / AMRC-C165).